A 711-amino-acid polypeptide reads, in one-letter code: Nucleolin (711 aa).

The interval 1 to 304 is disordered; the sequence is MVKLAKAGKN…KKQKVEGTEP (304 aa). N6-acetyllysine is present on residues Lys-9, Lys-15, and Lys-16. The segment covering 24–43 has biased composition (acidic residues); that stretch reads VEEDSEDEEMSEDEEDDSSG. Phosphoserine is present on residues Ser-28, Ser-34, Ser-41, and Ser-42. A compositionally biased stretch (low complexity) spans 56 to 107; it reads AAATSAKKVVVSPTKKVAVATPAKKAAVTPGKKAAATPAKKTVTPAKAVATP. The stretch at 58-65 is repeat 1; that stretch reads ATSAKKVV. The interval 58–135 is 8 X 8 AA tandem repeats of X-T-P-X-K-K-X-X; that stretch reads ATSAKKVVVS…GAAIPAKGAK (78 aa). At Ser-67 the chain carries Phosphoserine. Phosphothreonine is present on residues Thr-69, Thr-76, Thr-84, and Thr-92. 3 tandem repeats follow at residues 75-82, 83-90, and 91-98. Position 96 is an N6-acetyllysine (Lys-96). The residue at position 99 (Thr-99) is a Phosphothreonine. A 5; truncated repeat occupies 99 to 104; that stretch reads TPAKAV. Lys-102 is modified (N6-acetyllysine). Residues 105-112 form repeat 6; the sequence is ATPGKKGA. Thr-106 carries the post-translational modification Phosphothreonine. Lys-109 carries the N6-acetyllysine modification. Thr-113 bears the Phosphothreonine mark. Lys-116 is modified (N6-acetyllysine). A run of 2 repeats spans residues 120 to 127 and 128 to 135. Phosphothreonine is present on Thr-121. The segment covering 122–137 has biased composition (low complexity); the sequence is PGKKGAAIPAKGAKNG. The residue at position 124 (Lys-124) is an N6-acetyllysine. A phosphoserine mark is found at Ser-145, Ser-153, Ser-184, and Ser-207. Composition is skewed to acidic residues over residues 145–171 and 184–212; these read SDEE…DEIE and SEDE…EEAM. Phosphothreonine is present on Thr-215. Residues 235-273 are compositionally biased toward acidic residues; sequence EDEDEEEDDEDEDDDDDEDDEDEDDDDEDEEEEEEEEEP. Positions 274 to 301 are enriched in basic and acidic residues; the sequence is VKEAPGKRKKEMAKQKAAPEAKKQKVEG. Lys-298 participates in a covalent cross-link: Glycyl lysine isopeptide (Lys-Gly) (interchain with G-Cter in SUMO1); alternate. Lys-298 participates in a covalent cross-link: Glycyl lysine isopeptide (Lys-Gly) (interchain with G-Cter in SUMO2); alternate. Position 302 is a phosphothreonine (Thr-302). RRM domains are found at residues 308 to 384 and 394 to 467; these read FNLF…KPKG and RTLL…YTGE. Position 319 is an N6-acetyllysine (Lys-319). Lys-325 participates in a covalent cross-link: Glycyl lysine isopeptide (Lys-Gly) (interchain with G-Cter in SUMO1); alternate. Lys-325 participates in a covalent cross-link: Glycyl lysine isopeptide (Lys-Gly) (interchain with G-Cter in SUMO2); alternate. At Lys-349 the chain carries N6-acetyllysine. The residue at position 357 (Ser-357) is a Phosphoserine. At Thr-368 the chain carries Phosphothreonine. Residue Lys-371 forms a Glycyl lysine isopeptide (Lys-Gly) (interchain with G-Cter in SUMO2) linkage. Residue Lys-378 forms a Glycyl lysine isopeptide (Lys-Gly) (interchain with G-Cter in SUMO2); alternate linkage. Lys-378 is modified (N6-acetyllysine; alternate). Residues Lys-399 and Lys-404 each carry the N6-acetyllysine modification. A Phosphothreonine modification is found at Thr-406. An N6-acetyllysine mark is found at Lys-428 and Lys-445. Phosphoserine is present on residues Ser-459 and Ser-461. Residues Lys-468 and Lys-478 each carry the N6-acetyllysine modification. The RRM 3 domain occupies 487–561; that stretch reads KTLVLSNLSY…RAIRLELQGP (75 aa). Lys-514 participates in a covalent cross-link: Glycyl lysine isopeptide (Lys-Gly) (interchain with G-Cter in SUMO2); alternate. Lys-514 is subject to N6-acetyllysine; alternate. Lys-522 is subject to N6-acetyllysine. Ser-564 is modified (phosphoserine). Lys-573 carries the post-translational modification N6-acetyllysine. Residues 573-648 form the RRM 4 domain; the sequence is KTLFVKGLSE…NKVTLDWAKP (76 aa). A Glycyl lysine isopeptide (Lys-Gly) (interchain with G-Cter in SUMO2); alternate cross-link involves residue Lys-578. Lys-578 bears the N6-acetyllysine; alternate mark. At Ser-581 the chain carries Phosphoserine. Lys-590 participates in a covalent cross-link: Glycyl lysine isopeptide (Lys-Gly) (interchain with G-Cter in SUMO1); alternate. Residue Lys-590 forms a Glycyl lysine isopeptide (Lys-Gly) (interchain with G-Cter in SUMO2); alternate linkage. Phosphoserine occurs at positions 592 and 620. Lys-625 participates in a covalent cross-link: Glycyl lysine isopeptide (Lys-Gly) (interchain with G-Cter in SUMO2). Residues 641 to 711 form a disordered region; that stretch reads VTLDWAKPKG…KPQGKKTKFE (71 aa). Position 647 is an N6-acetyllysine (Lys-647). Positions 651-697 are enriched in gly residues; the sequence is EGGFGGRGGGRGGFGGRGGGRGGRGGFGGRGRGGFGGRGGFRGGRGG. Residues Arg-657, Arg-661, Arg-667, Arg-671, Arg-674, Arg-680, Arg-682, Arg-688, and Arg-692 each carry the asymmetric dimethylarginine modification. An Asymmetric dimethylarginine; alternate modification is found at Arg-695. Arg-695 bears the Omega-N-methylarginine; alternate mark. Over residues 698-711 the composition is skewed to basic and acidic residues; it reads GGDHKPQGKKTKFE.

Identified in a IGF2BP1-dependent mRNP granule complex containing untranslated mRNAs. Component of the SWAP complex that consists of NPM1, NCL/nucleolin, PARP1 and SWAP70. Component of a complex which is at least composed of HTATSF1/Tat-SF1, the P-TEFb complex components CDK9 and CCNT1, RNA polymerase II, SUPT5H, and NCL/nucleolin. Interacts with AICDA. Interacts with APTX. Interacts with C1QBP. Interacts with ERBB4. Interacts (via C-terminus) with FMR1 isoform 6 (via N-terminus). Interacts with GZF1; this interaction is important for nucleolar localization of GZF1. Interacts with NSUN2. Interacts with NVL. Interacts (via N-terminus domain) with SETX. Interacts (via RRM1 and C-terminal RRM4/Arg/Gly-rich domains) with TERT; the interaction is important for nucleolar localization of TERT. Interacts with WDR46. Interacts with ZFP36. Interacts with LRRC34. Interacts with RRP1B. Interacts with HNRNPU; this interaction occurs during mitosis. Interacts with RIOK1; RIOK1 recruits NCL to PRMT5 for symmetrically methylation. Interacts with ZBTB7B. Interacts with MDK; this interaction promotes NCL clustering and lateral movements of this complex into lipid rafts leading to MDK internalization. Interacts with HDGF. Interacts with ALKBH2. Interacts with IGFBP5; this interaction is necessary for IGFBP5 localization to the nucleus. Some glutamate residues are glycylated by TTLL8. This modification occurs exclusively on glutamate residues and results in a glycine chain on the gamma-carboxyl group. Post-translationally, symmetrically methylated by PRMT5.

The protein localises to the nucleus. It localises to the nucleolus. The protein resides in the cytoplasm. Its function is as follows. Nucleolin is the major nucleolar protein of growing eukaryotic cells. It is found associated with intranucleolar chromatin and pre-ribosomal particles. It induces chromatin decondensation by binding to histone H1. It is thought to play a role in pre-rRNA transcription and ribosome assembly. May play a role in the process of transcriptional elongation. Binds RNA oligonucleotides with 5'-UUAGGG-3' repeats more tightly than the telomeric single-stranded DNA 5'-TTAGGG-3' repeats. The chain is Nucleolin (NCL) from Macaca fascicularis (Crab-eating macaque).